We begin with the raw amino-acid sequence, 575 residues long: UvrABC system protein C (575 aa).

In terms of domain architecture, GIY-YIG spans 15–90 (AEPGVYQFEA…IKRHQPRYNV (76 aa)). Residues 198-233 (GVLAEPLRREMETAAASQAFERAASLRDRLEAVETF) enclose the UVR domain.

The protein belongs to the UvrC family. As to quaternary structure, interacts with UvrB in an incision complex.

The protein localises to the cytoplasm. Its function is as follows. The UvrABC repair system catalyzes the recognition and processing of DNA lesions. UvrC both incises the 5' and 3' sides of the lesion. The N-terminal half is responsible for the 3' incision and the C-terminal half is responsible for the 5' incision. This Natronomonas pharaonis (strain ATCC 35678 / DSM 2160 / CIP 103997 / JCM 8858 / NBRC 14720 / NCIMB 2260 / Gabara) (Halobacterium pharaonis) protein is UvrABC system protein C.